The chain runs to 101 residues: Putative monooxygenase Rv0793 (101 aa).

Positions 5 to 93 (VAVIARFMPR…LTRPVAVTVL (89 aa)) constitute an ABM domain.

Homodimer.

In terms of biological role, putative monooygenase that might be involved in antibiotic biosynthesis, or may act as reactive oxygen species scavenger that could help in evading host defenses. The chain is Putative monooxygenase Rv0793 from Mycobacterium tuberculosis (strain ATCC 25618 / H37Rv).